A 274-amino-acid polypeptide reads, in one-letter code: uncharacterized protein (274 aa).

Residues 253–274 are disordered; it reads QTGDVRTTEGTALTDDTTKRNI.

This is an uncharacterized protein from Deinococcus radiodurans (strain ATCC 13939 / DSM 20539 / JCM 16871 / CCUG 27074 / LMG 4051 / NBRC 15346 / NCIMB 9279 / VKM B-1422 / R1).